A 137-amino-acid chain; its full sequence is Small ribosomal subunit protein bS6 (137 aa).

Residues 99–137 form a disordered region; that stretch reads LSPMKAAESREDRRSGGDDRPRRSADSEERQSASQDEEE. Basic and acidic residues predominate over residues 105–129; the sequence is AESREDRRSGGDDRPRRSADSEERQ.

This sequence belongs to the bacterial ribosomal protein bS6 family.

Functionally, binds together with bS18 to 16S ribosomal RNA. This Marinobacter nauticus (strain ATCC 700491 / DSM 11845 / VT8) (Marinobacter aquaeolei) protein is Small ribosomal subunit protein bS6.